The following is a 477-amino-acid chain: MTDWPVYHRIDGPIVMIGFGSIGRGTLPLIERHFAFDRSKLVVIDPSDEARKLAEARGVRFIQQAVTRDNYRELLVPLLTAGPGQGFCVNLSVDTSSLDIMELARENGALYIDTVVEPWLGFYFDPDLKPEARSNYALRETVLAARRNKPGGTTAVSCCGANPGMVSWFVKQALVNLAADLGVTGEEPTTREEWARLAMDLGVKGIHIAERDTQRASFPKPFDVFVNTWSVEGFVSEGLQPAELGWGTFERWMPDNARGHDSGCGAGIYLLQPGANTRVRSWTPTAMAQYGFLVTHNESISIADFLTVRDAAGQAVYRPTCHYAYHPCNDAVLSLHEMFGSGKRQSDWRILDETEIVDGIDELGVLLYGHGKNAYWYGSQLSIEETRRIAPDQNATGLQVSSAVLAGMVWALENPNAGIVEADDLDFRRCLEVQTPYLGPVVGVYTDWTPLAGRPGLFPEDIDTSDPWQFRNVLVRD.

The protein belongs to the saccharopine dehydrogenase family. Homodimer. NAD(+) is required as a cofactor.

It catalyses the reaction 2 putrescine = sym-homospermidine + NH4(+). It carries out the reaction putrescine + spermidine = sym-homospermidine + propane-1,3-diamine. Functionally, involved in the NAD(+)-dependent synthesis of the polyamine homospermidine from putrescine. The chain is Homospermidine synthase (hss) from Blastochloris viridis (Rhodopseudomonas viridis).